A 388-amino-acid chain; its full sequence is Chaperone protein DnaJ (388 aa).

Positions 5–70 (DYYEVLGVAR…QKRAAYDRFG (66 aa)) constitute a J domain. The CR-type zinc finger occupies 141 to 219 (GKTETIRLPT…CGGAGRVTRE (79 aa)). Positions 154, 157, 171, 174, 193, 196, 207, and 210 each coordinate Zn(2+). CXXCXGXG motif repeat units follow at residues 154 to 161 (CEVCAGSG), 171 to 178 (CPTCGGYG), 193 to 200 (CPNCHGRG), and 207 to 214 (CTACGGAG).

The protein belongs to the DnaJ family. As to quaternary structure, homodimer. It depends on Zn(2+) as a cofactor.

The protein resides in the cytoplasm. Functionally, participates actively in the response to hyperosmotic and heat shock by preventing the aggregation of stress-denatured proteins and by disaggregating proteins, also in an autonomous, DnaK-independent fashion. Unfolded proteins bind initially to DnaJ; upon interaction with the DnaJ-bound protein, DnaK hydrolyzes its bound ATP, resulting in the formation of a stable complex. GrpE releases ADP from DnaK; ATP binding to DnaK triggers the release of the substrate protein, thus completing the reaction cycle. Several rounds of ATP-dependent interactions between DnaJ, DnaK and GrpE are required for fully efficient folding. Also involved, together with DnaK and GrpE, in the DNA replication of plasmids through activation of initiation proteins. This is Chaperone protein DnaJ from Methylobacterium nodulans (strain LMG 21967 / CNCM I-2342 / ORS 2060).